Consider the following 1010-residue polypeptide: Glycine--tRNA ligase (1010 aa).

The tract at residues 1–312 (MSEHPLTLQS…TSESVVPMIS (312 aa)) is glycine--tRNA ligase alpha subunit. Residues 313 to 1010 (STEDLLLEIG…SLCHWESVAV (698 aa)) form a glycine--tRNA ligase beta subunit region.

The protein belongs to the class-II aminoacyl-tRNA synthetase family.

Its subcellular location is the cytoplasm. It catalyses the reaction tRNA(Gly) + glycine + ATP = glycyl-tRNA(Gly) + AMP + diphosphate. This chain is Glycine--tRNA ligase (glyQS), found in Chlamydia pneumoniae (Chlamydophila pneumoniae).